Consider the following 464-residue polypeptide: Septin homolog spn5 (464 aa).

The disordered stretch occupies residues 28-91; that stretch reads QVDESSAKRS…VPNSNGKSIP (64 aa). Composition is skewed to basic and acidic residues over residues 41–54 and 69–81; these read ESRK…KEQI and TAKD…KQDE. One can recognise a Septin-type G domain in the interval 115–370; sequence NGIDINLIVV…DTFRTEKLVA (256 aa). Positions 125 to 132 are G1 motif; sequence GESSLGKT. GTP contacts are provided by residues 125-132, Thr151, Gly177, 257-265, Gly304, and Arg319; these read GESSLGKT and KADTMTSDE. The G3 motif stretch occupies residues 174-177; it reads DTPG. The G4 motif stretch occupies residues 256–259; sequence GKAD. Residues 396–453 adopt a coiled-coil conformation; it reads LVEEALTKVMKEKYREKENNLELLETNLKTHHKDYKHALKKRITALEEEKNRLIKEIG.

This sequence belongs to the TRAFAC class TrmE-Era-EngA-EngB-Septin-like GTPase superfamily. Septin GTPase family. In terms of assembly, component of the sporulation-specific septin complex composed of at least spn2, spn5, spn6 and spn7.

It is found in the nucleus. It localises to the forespore membrane. Its function is as follows. Septin-like protein involved in the correct orientation of forespore membrane extension during sporulation. This Schizosaccharomyces pombe (strain 972 / ATCC 24843) (Fission yeast) protein is Septin homolog spn5 (spn5).